Here is a 127-residue protein sequence, read N- to C-terminus: Large ribosomal subunit protein bL12 (127 aa).

The protein belongs to the bacterial ribosomal protein bL12 family. Homodimer. Part of the ribosomal stalk of the 50S ribosomal subunit. Forms a multimeric L10(L12)X complex, where L10 forms an elongated spine to which 2 to 4 L12 dimers bind in a sequential fashion. Binds GTP-bound translation factors.

Its function is as follows. Forms part of the ribosomal stalk which helps the ribosome interact with GTP-bound translation factors. Is thus essential for accurate translation. In Bordetella bronchiseptica (strain ATCC BAA-588 / NCTC 13252 / RB50) (Alcaligenes bronchisepticus), this protein is Large ribosomal subunit protein bL12.